We begin with the raw amino-acid sequence, 290 residues long: 4-hydroxybenzoate octaprenyltransferase (290 aa).

Helical transmembrane passes span 33–53, 99–119, 141–161, 213–233, 234–254, and 268–288; these read LWAL…AVFV, LFVI…VKTI, LPQV…FCAV, LIIG…GWLN, GLGA…IWQQ, and AFLN…LSYL.

It belongs to the UbiA prenyltransferase family. Mg(2+) serves as cofactor.

The protein localises to the cell inner membrane. The catalysed reaction is all-trans-octaprenyl diphosphate + 4-hydroxybenzoate = 4-hydroxy-3-(all-trans-octaprenyl)benzoate + diphosphate. It functions in the pathway cofactor biosynthesis; ubiquinone biosynthesis. Functionally, catalyzes the prenylation of para-hydroxybenzoate (PHB) with an all-trans polyprenyl group. Mediates the second step in the final reaction sequence of ubiquinone-8 (UQ-8) biosynthesis, which is the condensation of the polyisoprenoid side chain with PHB, generating the first membrane-bound Q intermediate 3-octaprenyl-4-hydroxybenzoate. This is 4-hydroxybenzoate octaprenyltransferase from Cronobacter sakazakii (strain ATCC BAA-894) (Enterobacter sakazakii).